We begin with the raw amino-acid sequence, 351 residues long: Photosystem II D2 protein (351 aa).

Residues 39 to 59 traverse the membrane as a helical segment; it reads CSYLALGAWFTGTTFVTSWYT. H116 contributes to the chlorophyll a binding site. Residues 123-139 form a helical membrane-spanning segment; it reads GFCLRQFEIARLVGLRP. Positions 128 and 141 each coordinate pheophytin a. A helical membrane pass occupies residues 151 to 164; that stretch reads VFVSVFLLYPLGQA. Position 196 (H196) interacts with chlorophyll a. A helical membrane pass occupies residues 206–226; that stretch reads GALLCAIHGATVQNTLFEDGE. A plastoquinone-binding residues include H213 and F260. H213 lines the Fe cation pocket. A Fe cation-binding site is contributed by H267. A helical membrane pass occupies residues 277–293; it reads GLWASSIGIVGLALNLR.

Belongs to the reaction center PufL/M/PsbA/D family. As to quaternary structure, PSII is composed of 1 copy each of membrane proteins PsbA, PsbB, PsbC, PsbD, PsbE, PsbF, PsbH, PsbI, PsbJ, PsbK, PsbL, PsbM, PsbT, PsbX, PsbY, PsbZ, Psb30/Ycf12, at least 3 peripheral proteins of the oxygen-evolving complex and a large number of cofactors. It forms dimeric complexes. The D1/D2 heterodimer binds P680, chlorophylls that are the primary electron donor of PSII, and subsequent electron acceptors. It shares a non-heme iron and each subunit binds pheophytin, quinone, additional chlorophylls, carotenoids and lipids. There is also a Cl(-1) ion associated with D1 and D2, which is required for oxygen evolution. The PSII complex binds additional chlorophylls, carotenoids and specific lipids. serves as cofactor.

It localises to the plastid. The protein resides in the chloroplast thylakoid membrane. It catalyses the reaction 2 a plastoquinone + 4 hnu + 2 H2O = 2 a plastoquinol + O2. Functionally, photosystem II (PSII) is a light-driven water:plastoquinone oxidoreductase that uses light energy to abstract electrons from H(2)O, generating O(2) and a proton gradient subsequently used for ATP formation. It consists of a core antenna complex that captures photons, and an electron transfer chain that converts photonic excitation into a charge separation. The D1/D2 (PsbA/PsbD) reaction center heterodimer binds P680, the primary electron donor of PSII as well as several subsequent electron acceptors. D2 is needed for assembly of a stable PSII complex. The polypeptide is Photosystem II D2 protein (Cyanidioschyzon merolae (strain NIES-3377 / 10D) (Unicellular red alga)).